The following is a 514-amino-acid chain: Developmental and secondary metabolism regulator veA (514 aa).

Residues 26-218 form the Velvet domain; it reads NRHLWYQLTV…ADQGCHVRIR (193 aa). The Nuclear localization signal signature appears at 40 to 45; it reads ERARAC. A disordered region spans residues 219–463; it reads RDVRMRKRDA…PIGSKRKHDQ (245 aa). Basic and acidic residues predominate over residues 228–243; sequence AKSNNGRDRREDDMAR. Low complexity predominate over residues 256 to 267; that stretch reads SAAARARSMSNS. Residues 386–396 show a composition bias toward polar residues; that stretch reads SYPSTPVSSHP. Residues 411–448 form a PEST region; that stretch reads KSPSNSVSPSNSSLKITDLLVQPLPSSEPKLEVGSAPC. Low complexity predominate over residues 412–423; the sequence is SPSNSVSPSNSS.

This sequence belongs to the velvet family. VeA subfamily. As to quaternary structure, component of the heterotrimeric velvet complex composed of laeA, veA and velB; VeA acting as a bridging protein between laeA and velB.

It localises to the nucleus. The protein resides in the cytoplasm. Functionally, component of the velvet transcription factor complex that controls sexual/asexual developmental ratio in response to light, promoting sexual development in the darkness while stimulating asexual sporulation under illumination. The velvet complex hat acts as a global regulator for secondary metabolite gene expression. Controls the expression of the cephalosporin C gene cluster. Regulates hyphal fragmentation. In Hapsidospora chrysogenum (strain ATCC 11550 / CBS 779.69 / DSM 880 / IAM 14645 / JCM 23072 / IMI 49137) (Acremonium chrysogenum), this protein is Developmental and secondary metabolism regulator veA.